Here is an 81-residue protein sequence, read N- to C-terminus: Dermaseptin-B2 (81 aa).

The N-terminal stretch at methionine 1 to cysteine 22 is a signal peptide. Residues glutamate 23–methionine 43 constitute a propeptide that is removed on maturation. Residues glutamate 24 to glycine 46 form a disordered region. Residues glutamate 30–glutamine 40 are compositionally biased toward acidic residues. Positions valine 54–glycine 55 are hinge region that separates the two alpha-helices that constitute the peptide. Position 78 is a valine amide (valine 78). The propeptide occupies glutamate 80–glutamine 81.

Post-translationally, amidation permits an increased antimicrobial activity against some microorganisms such as T.album and S.cerevisiae. May contain a D-amino acid residue, since the natural peptide is not identical in chromatographic properties to the synthetic peptide. As to expression, expressed by the skin glands.

The protein localises to the secreted. The protein resides in the target cell membrane. Cationic amphipathic alpha-helical antimicrobial peptide with potent activity against Gram-negative and Gram-positive bacteria, fungi and protozoa. Acts in a synergistic effect in combination with Plasticin-B1 at doses that are not active alone. Acts by disturbing membrane functions. On model membranes, induces a strong perturbation of anionic lipid bilayers, resides at the hydrocarbon core-water interface, parallel to the plane of the membrane, and interacts preferentially with the polar head groups and glycerol backbone region of the anionic phospholipids, as well as the region of the lipid acyl chain near the bilayer surface. Induces a positive curvature of the bilayer and clustering of anionic lipids, consistent with a carpet mechanism, that may lead to the formation of mixed peptide-phospholipid toroidal, transient pores and membrane permeation/disruption once a threshold peptide accumulation is reached. Also enhances binding of agonists to adenosine A1 receptors (ADORA1), adenosine A2a receptors (ADORA2A), alpha-2 adrenergic receptors (ADRA2A) and 5-hydroxytryptamine 1A receptors (HTR1A). In addition, it enhances guanyl nucleotide exchange which may result in the conversion of receptors to a high affinity state complexed with guanyl nucleotide free G-protein. Affects human behavior eliciting profound malaise, followed by listlessness and then euphoria. Does not show cytotoxic activity on CHO cells. Does not act as a chemoattractant. Does not show hemolytic activity. This Phyllomedusa bicolor (Two-colored leaf frog) protein is Dermaseptin-B2 (ADR).